A 158-amino-acid chain; its full sequence is Putative metalloproteinase inhibitor tag-225 (158 aa).

Residues 1 to 20 form the signal peptide; sequence MQNLSLSLVILSVLIAVTLA. Cys-21 is a binding site for Zn(2+). Positions 21–25 are involved in metalloproteinase-binding; sequence CKCRE. 3 disulfide bridges follow: Cys-21/Cys-96, Cys-23/Cys-123, and Cys-33/Cys-158. Positions 21–158 constitute an NTR domain; sequence CKCREQSTKE…LQSQVKSIKC (138 aa). Asn-79 carries an N-linked (GlcNAc...) asparagine glycan. The segment at 93–94 is involved in metalloproteinase-binding; it reads AP.

This sequence belongs to the protease inhibitor I35 (TIMP) family.

The protein localises to the secreted. Its function is as follows. Complexes with metalloproteinases and irreversibly inactivates them by binding to their catalytic zinc cofactor. This chain is Putative metalloproteinase inhibitor tag-225 (tag-225), found in Caenorhabditis elegans.